The chain runs to 417 residues: Solanesyl diphosphate synthase 2, chloroplastic (417 aa).

The transit peptide at 1–60 (MMMSCRNIDLGTSVLDHSCSSSSTSRRFLFGNSSKTVCMIGGRSCVGNLVFLRRDLATCR) directs the protein to the chloroplast. Residues lysine 137, arginine 140, and histidine 175 each coordinate isopentenyl diphosphate. Mg(2+) contacts are provided by aspartate 182 and aspartate 186. Arginine 191 lines the an all-trans-polyprenyl diphosphate pocket. Residue arginine 192 participates in isopentenyl diphosphate binding. The an all-trans-polyprenyl diphosphate site is built by lysine 268, threonine 269, glutamine 306, and lysine 323.

It belongs to the FPP/GGPP synthase family. In terms of assembly, homodimer. Interacts with FBN5. Requires Mg(2+) as cofactor. Higher expression in leaves than in roots.

It is found in the plastid. The protein localises to the chloroplast. The enzyme catalyses 5 isopentenyl diphosphate + (2E,6E,10E)-geranylgeranyl diphosphate = all-trans-nonaprenyl diphosphate + 5 diphosphate. Its function is as follows. Involved in providing solanesyl diphosphate for plastoquinone-9 (PQ-9) formation in plastids. Catalyzes the elongation of the prenyl side chain of PQ-9 in plastids. Contributes to the biosynthesis of plastochromanol-8 (PC-8) in plastids. Does not contribute to the synthesis of tocopherol or ubiquinone. PQ-9 and PC-8 are lipophilic antioxidants that act as protectant against photooxidative stress under high light stress conditions. Prefers geranylgeranyl diphosphate to farnesyl diphosphate as substrate. No activity with geranyl diphosphate or dimethylallyl diphosphate as substrate. The chain is Solanesyl diphosphate synthase 2, chloroplastic from Arabidopsis thaliana (Mouse-ear cress).